The chain runs to 167 residues: Beta-3 adrenergic receptor (167 aa).

The Extracellular portion of the chain corresponds to 1–25 (RVGADAEAQECHSNPRCCSFASNMP). Residues Cys-11 and Cys-17 are joined by a disulfide bond. Residues 26-47 (YALLSSSVSFYLPLLVMLFVYA) form a helical membrane-spanning segment. Topologically, residues 48–114 (RVFVVAKRQR…LPLREHRALR (67 aa)) are cytoplasmic. Residues 66 to 97 (RFPPEESPRSPSRSPSPVAGGTGEAPDGVPSC) are disordered. A helical membrane pass occupies residues 115 to 136 (TLGLIMGIFSLCWLPFFLANVL). Residues 137–148 (RALAGPSIVPNG) are Extracellular-facing. The chain crosses the membrane as a helical span at residues 149–167 (VFIALNWLGYANSAFNPLI).

The protein belongs to the G-protein coupled receptor 1 family. Adrenergic receptor subfamily. ADRB3 sub-subfamily. As to quaternary structure, interacts with ARRDC3.

Its subcellular location is the cell membrane. Its function is as follows. Beta-adrenergic receptors mediate the catecholamine-induced activation of adenylate cyclase through the action of G proteins. Beta-3 is involved in the regulation of lipolysis and thermogenesis. The protein is Beta-3 adrenergic receptor (ADRB3) of Meriones unguiculatus (Mongolian jird).